The following is a 732-amino-acid chain: Phosphoribosylformylglycinamidine synthase subunit PurL (732 aa).

His-32 is an active-site residue. Tyr-35 lines the ATP pocket. Position 81 (Glu-81) interacts with Mg(2+). Substrate contacts are provided by residues Ser-82–His-85 and Arg-104. His-83 functions as the Proton acceptor in the catalytic mechanism. Residue Asp-105 participates in Mg(2+) binding. Gln-230 contributes to the substrate binding site. Residue Asp-258 participates in Mg(2+) binding. Glu-302–Gln-304 is a binding site for substrate. Residues Asp-485 and Gly-522 each contribute to the ATP site. Asn-523 contacts Mg(2+). Ser-525 serves as a coordination point for substrate.

It belongs to the FGAMS family. As to quaternary structure, monomer. Part of the FGAM synthase complex composed of 1 PurL, 1 PurQ and 2 PurS subunits.

It is found in the cytoplasm. The enzyme catalyses N(2)-formyl-N(1)-(5-phospho-beta-D-ribosyl)glycinamide + L-glutamine + ATP + H2O = 2-formamido-N(1)-(5-O-phospho-beta-D-ribosyl)acetamidine + L-glutamate + ADP + phosphate + H(+). Its pathway is purine metabolism; IMP biosynthesis via de novo pathway; 5-amino-1-(5-phospho-D-ribosyl)imidazole from N(2)-formyl-N(1)-(5-phospho-D-ribosyl)glycinamide: step 1/2. Functionally, part of the phosphoribosylformylglycinamidine synthase complex involved in the purines biosynthetic pathway. Catalyzes the ATP-dependent conversion of formylglycinamide ribonucleotide (FGAR) and glutamine to yield formylglycinamidine ribonucleotide (FGAM) and glutamate. The FGAM synthase complex is composed of three subunits. PurQ produces an ammonia molecule by converting glutamine to glutamate. PurL transfers the ammonia molecule to FGAR to form FGAM in an ATP-dependent manner. PurS interacts with PurQ and PurL and is thought to assist in the transfer of the ammonia molecule from PurQ to PurL. This chain is Phosphoribosylformylglycinamidine synthase subunit PurL, found in Methanococcus aeolicus (strain ATCC BAA-1280 / DSM 17508 / OCM 812 / Nankai-3).